Reading from the N-terminus, the 333-residue chain is B3 domain-containing protein At1g32030 (333 aa).

Polar residues-rich tracts occupy residues 76 to 99 and 134 to 143; these read VTVRNPEQNQQNLHRVSTSSSLLD and PQNASSSSTL. The interval 76-179 is disordered; it reads VTVRNPEQNQ…SEPKKAKTPY (104 aa). Residues 220 to 328 constitute a DNA-binding region (TF-B3); the sequence is QSRLLMPFNT…ILSFALVLPP (109 aa).

The protein localises to the nucleus. The polypeptide is B3 domain-containing protein At1g32030 (Arabidopsis thaliana (Mouse-ear cress)).